The following is a 341-amino-acid chain: Phenylalanine--tRNA ligase alpha subunit (341 aa).

A Mg(2+)-binding site is contributed by E254.

This sequence belongs to the class-II aminoacyl-tRNA synthetase family. Phe-tRNA synthetase alpha subunit type 1 subfamily. In terms of assembly, tetramer of two alpha and two beta subunits. It depends on Mg(2+) as a cofactor.

It localises to the cytoplasm. The enzyme catalyses tRNA(Phe) + L-phenylalanine + ATP = L-phenylalanyl-tRNA(Phe) + AMP + diphosphate + H(+). The sequence is that of Phenylalanine--tRNA ligase alpha subunit from Chlorobaculum parvum (strain DSM 263 / NCIMB 8327) (Chlorobium vibrioforme subsp. thiosulfatophilum).